The sequence spans 161 residues: Regulatory protein RecX (161 aa).

The protein belongs to the RecX family.

It is found in the cytoplasm. In terms of biological role, modulates RecA activity. This chain is Regulatory protein RecX, found in Thermotoga petrophila (strain ATCC BAA-488 / DSM 13995 / JCM 10881 / RKU-1).